The following is a 270-amino-acid chain: Regulator of G-protein signaling rgs-10 (270 aa).

In terms of domain architecture, RGS spans 135–252 (SPETLAASEY…LEDPLYLDLV (118 aa)).

Shown to have a role in viability and embryogenesis. The polypeptide is Regulator of G-protein signaling rgs-10 (rgs-10) (Caenorhabditis elegans).